The following is a 29-amino-acid chain: uncharacterized protein (29 aa).

Residues F8–G28 form a helical membrane-spanning segment.

The protein belongs to the SscA family.

Its subcellular location is the membrane. This is an uncharacterized protein from Bacillus subtilis (strain 168).